Reading from the N-terminus, the 688-residue chain is Complement C1s subcomponent (688 aa).

An N-terminal signal peptide occupies residues 1–15; that stretch reads MWCFVFFSLLASFSA. The 115-residue stretch at 16–130 folds into the CUB 1 domain; sequence EPTMYGEILS…TGFAAYYSAV (115 aa). Positions 60, 68, 113, 131, 132, and 134 each coordinate Ca(2+). A disulfide bridge links Cys65 with Cys83. The EGF-like; calcium-binding domain occupies 131–172; sequence DVNECTDFTDVPCSHFCNNFIGGYFCSCPPEYFLHDDMRTCG. 3 disulfide bridges follow: Cys135-Cys147, Cys143-Cys156, and Cys158-Cys171. Positions 149, 150, and 153 each coordinate Ca(2+). Asn149 carries the (3R)-3-hydroxyasparagine modification. Residue Asn174 is glycosylated (N-linked (GlcNAc...) asparagine). An intrachain disulfide couples Cys175 to Cys202. Positions 175-290 constitute a CUB 2 domain; sequence CSGDVFTALI…KGWKLRYHGD (116 aa). Ca(2+) contacts are provided by Glu226, Asp236, Asp275, Gly278, and Gln279. Cysteines 234 and 251 form a disulfide. 2 consecutive Sushi domains span residues 292-356 and 357-423; these read IPCP…ECQP and VDCG…KCIP. Cystine bridges form between Cys294-Cys341, Cys321-Cys354, Cys359-Cys403, Cys386-Cys421, Cys425-Cys549, Cys595-Cys618, and Cys627-Cys659. Residue Asn406 is glycosylated (N-linked (GlcNAc...) asparagine). A Peptidase S1 domain is found at 438 to 680; the sequence is IFGGYSTKIQ…YVDWILKTMQ (243 aa). Active-site charge relay system residues include His475 and Asp529. Catalysis depends on Ser631, which acts as the Charge relay system.

The protein belongs to the peptidase S1 family. In terms of assembly, core component of the complement C1 complex, a calcium-dependent complex composed of 1 molecule of the C1Q subcomplex, 2 molecules of C1R and 2 molecules of C1S. The C1Q subcomplex is composed 18 subunits: 3 chains of C1QA, C1QB, and C1QC trimerize to form 6 collagen-like triple helices connected to six globular ligand-recognition modules. Post-translationally, cleaved and activated by C1R to generate Complement C1s subcomponent heavy and light chains. The iron and 2-oxoglutarate dependent 3-hydroxylation of aspartate and asparagine is (R) stereospecific within EGF domains.

The protein resides in the secreted. It localises to the cell surface. The enzyme catalyses Cleavage of Arg-|-Ala bond in complement component C4 to form C4a and C4b, and Lys(or Arg)-|-Lys bond in complement component C2 to form C2a and C2b: the 'classical' pathway C3 convertase.. Cleaved and activated by C1R. Immunoglobulin-binding promotes autoactivation of C1R, which results in the cleavage of the Arg-Ile bond in the catalytic domain. Inhibited by C1 inhibitor (SERPING1). Component of the complement C1 complex, a multiprotein complex that initiates the classical pathway of the complement system, a cascade of proteins that leads to phagocytosis and breakdown of pathogens and signaling that strengthens the adaptive immune system. C1S is activated following association of the C1 complex with immunoglobulins (IgG or IgM) complexed with antigens to form antigen-antibody complexes on the surface of pathogens. C1S is cleaved and activated by C1R to generate C1s subcomponent heavy and light chains. C1s subcomponent light chain then cleaves and activates C2 and C4, the next components of the classical complement pathway. Its function is as follows. Serine protease component of the complement C1 complex, which catalyzes cleavage and activation of C2 and C4, the next components of the classical complement pathway. Also cleaves IGFBP5 and thereby inhibits the trophic effects of IGF1. The protein is Complement C1s subcomponent of Rattus norvegicus (Rat).